The primary structure comprises 426 residues: MPTELSDITIQSVLPCDYSLFKNNLRVSRLPESRFVFSPKEEINCQSLLQGPELKTALDNLNFIHKQKFEHQFRHGYWKLHPHPHHQHDSIIPASWIHDTPHMKLVFHRLQNLPDGDLLLENDPKNNVGYFISGGIAGIVSRTCTAPLDRLKVMLISDTGSKPSPKYPFATLLHTTKVLWNRNGIRSFFVGNGINVLKVMPESSIKFGTYEAMKRVLGISSSSENHSPLYSYLAGGMAGSVAQMFIYPVDTLKFRIQCSDLSRGQHGKSIILSNAKELYKSVGIRGYYRGVLVGILGMFPYSATDLGTFEGLKRTWIGILASRDNVDPQDVKLPNGLVMAFGALSGSTGATIVFPLNVIRTRLQTQGTSAHPATYDGFIDCFYKTTKNEGFRGLYKGLSPNLLKVAPSVAISYLVYENCKKWLGLE.

3 Solcar repeats span residues K125–V216, H226–T315, and P334–W422. 6 consecutive transmembrane segments (helical) span residues Y130–L151, G193–M213, L229–V249, G290–E310, G336–L356, and L394–V415.

This sequence belongs to the mitochondrial carrier (TC 2.A.29) family.

The protein resides in the mitochondrion inner membrane. This is an uncharacterized protein from Schizosaccharomyces pombe (strain 972 / ATCC 24843) (Fission yeast).